The following is a 106-amino-acid chain: SH3 domain-binding glutamic acid-rich-like protein 2-A (106 aa).

Residues 61-67 (QGNPLPP) carry the SH3-binding motif.

Belongs to the SH3BGR family.

It is found in the nucleus. In Xenopus laevis (African clawed frog), this protein is SH3 domain-binding glutamic acid-rich-like protein 2-A (sh3bgrl2-a).